Consider the following 222-residue polypeptide: Putative N-acetylmannosamine-6-phosphate 2-epimerase (222 aa).

Belongs to the NanE family.

It carries out the reaction an N-acyl-D-glucosamine 6-phosphate = an N-acyl-D-mannosamine 6-phosphate. Its pathway is amino-sugar metabolism; N-acetylneuraminate degradation; D-fructose 6-phosphate from N-acetylneuraminate: step 3/5. Converts N-acetylmannosamine-6-phosphate (ManNAc-6-P) to N-acetylglucosamine-6-phosphate (GlcNAc-6-P). The polypeptide is Putative N-acetylmannosamine-6-phosphate 2-epimerase (Staphylococcus aureus (strain MSSA476)).